Reading from the N-terminus, the 286-residue chain is Bifunctional protein FolD (286 aa).

Residues 165–167 (GRS), Ser-190, and Val-231 contribute to the NADP(+) site.

Belongs to the tetrahydrofolate dehydrogenase/cyclohydrolase family. In terms of assembly, homodimer.

The enzyme catalyses (6R)-5,10-methylene-5,6,7,8-tetrahydrofolate + NADP(+) = (6R)-5,10-methenyltetrahydrofolate + NADPH. It carries out the reaction (6R)-5,10-methenyltetrahydrofolate + H2O = (6R)-10-formyltetrahydrofolate + H(+). The protein operates within one-carbon metabolism; tetrahydrofolate interconversion. Catalyzes the oxidation of 5,10-methylenetetrahydrofolate to 5,10-methenyltetrahydrofolate and then the hydrolysis of 5,10-methenyltetrahydrofolate to 10-formyltetrahydrofolate. The sequence is that of Bifunctional protein FolD from Bacillus anthracis (strain A0248).